Reading from the N-terminus, the 171-residue chain is MDRIQKEASVEELNGIFSEAGSVVMAHYNGMTVAEMTELRAKLRELGGTFKVVRNRLAKIALQGKPGEGAADLFTGPVAIAYSEDFVAAPKVLVEYAKSNDKLVILGGFMEEDVFDAAGIDALSKMPSREELIATISARLMGQASQVAQRLMAPAQGLAGAIDVIREKADA.

It belongs to the universal ribosomal protein uL10 family. As to quaternary structure, part of the ribosomal stalk of the 50S ribosomal subunit. The N-terminus interacts with L11 and the large rRNA to form the base of the stalk. The C-terminus forms an elongated spine to which L12 dimers bind in a sequential fashion forming a multimeric L10(L12)X complex.

Functionally, forms part of the ribosomal stalk, playing a central role in the interaction of the ribosome with GTP-bound translation factors. The chain is Large ribosomal subunit protein uL10 from Maricaulis maris (strain MCS10) (Caulobacter maris).